Consider the following 176-residue polypeptide: Glutathione-regulated potassium-efflux system ancillary protein KefF (176 aa).

Residues His8, 14-17 (SHAN), 65-68 (MQWY), and 105-108 (TTGG) contribute to the FMN site.

It belongs to the NAD(P)H dehydrogenase (quinone) family. KefF subfamily. Homodimer. Interacts with KefC. FMN is required as a cofactor.

It localises to the cell inner membrane. It carries out the reaction a quinone + NADH + H(+) = a quinol + NAD(+). It catalyses the reaction a quinone + NADPH + H(+) = a quinol + NADP(+). Functionally, regulatory subunit of a potassium efflux system that confers protection against electrophiles. Required for full activity of KefC. Shows redox enzymatic activity, but this enzymatic activity is not required for activation of KefC. In Salmonella dublin (strain CT_02021853), this protein is Glutathione-regulated potassium-efflux system ancillary protein KefF.